Reading from the N-terminus, the 529-residue chain is Methionine--tRNA ligase (529 aa).

Residues 12–22 carry the 'HIGH' region motif; that stretch reads YYVNALPHIGS. Zn(2+)-binding residues include cysteine 127, cysteine 130, cysteine 145, and histidine 148. Residues 301 to 305 carry the 'KMSKS' region motif; sequence KMGKS. Lysine 304 contributes to the ATP binding site.

It belongs to the class-I aminoacyl-tRNA synthetase family. MetG type 2A subfamily. Monomer. The cofactor is Zn(2+).

It is found in the cytoplasm. The enzyme catalyses tRNA(Met) + L-methionine + ATP = L-methionyl-tRNA(Met) + AMP + diphosphate. Its function is as follows. Is required not only for elongation of protein synthesis but also for the initiation of all mRNA translation through initiator tRNA(fMet) aminoacylation. The sequence is that of Methionine--tRNA ligase from Thermosynechococcus vestitus (strain NIES-2133 / IAM M-273 / BP-1).